We begin with the raw amino-acid sequence, 479 residues long: Bifunctional NAD(P)H-hydrate repair enzyme Nnr (479 aa).

Positions 1–214 (MTVIIQGRSF…GIGIPLLAEI (214 aa)) are NAD(P)H-hydrate epimerase. The region spanning 31 to 214 (MRRIDQNAQA…GIGIPLLAEI (184 aa)) is the YjeF N-terminal domain. Residues 76–80 (NNGGD) form an NADPHX 1; for epimerase activity region. Asn-77 and Asp-146 together coordinate K(+). An NADPHX 1; for epimerase activity region spans residues 150 to 156 (GTGGTGS). (6S)-NADPHX is bound at residue Asp-179. K(+) is bound at residue Ser-182. The YjeF C-terminal domain maps to 216–474 (TGPGDLLILR…TAVPQVLFRS (259 aa)). Residues 216 to 479 (TGPGDLLILR…VLFRSTSERE (264 aa)) are ADP-dependent (S)-NAD(P)H-hydrate dehydratase. Residue Gly-312 participates in (6S)-NADPHX binding. Positions 353–359 (HAGEFAR) are NADPHX 2; for dehydratase activity. ADP is bound by residues 388 to 392 (KGAVD) and 407 to 416 (TPAMTTGGTG). Asp-417 contacts (6S)-NADPHX.

In the N-terminal section; belongs to the NnrE/AIBP family. The protein in the C-terminal section; belongs to the NnrD/CARKD family. The cofactor is K(+).

The catalysed reaction is (6S)-NADHX + ADP = AMP + phosphate + NADH + H(+). It carries out the reaction (6S)-NADPHX + ADP = AMP + phosphate + NADPH + H(+). The enzyme catalyses (6R)-NADHX = (6S)-NADHX. It catalyses the reaction (6R)-NADPHX = (6S)-NADPHX. Functionally, bifunctional enzyme that catalyzes the epimerization of the S- and R-forms of NAD(P)HX and the dehydration of the S-form of NAD(P)HX at the expense of ADP, which is converted to AMP. This allows the repair of both epimers of NAD(P)HX, a damaged form of NAD(P)H that is a result of enzymatic or heat-dependent hydration. The polypeptide is Bifunctional NAD(P)H-hydrate repair enzyme Nnr (nnr) (Methanospirillum hungatei JF-1 (strain ATCC 27890 / DSM 864 / NBRC 100397 / JF-1)).